A 245-amino-acid polypeptide reads, in one-letter code: 4-hydroxy-tetrahydrodipicolinate reductase (245 aa).

NAD(+)-binding positions include 8-13 (GSTGKM), 78-80 (GTT), and 102-105 (SANM). Catalysis depends on His-134, which acts as the Proton donor/acceptor. Position 135 (His-135) interacts with (S)-2,3,4,5-tetrahydrodipicolinate. Residue Lys-138 is the Proton donor of the active site. 144 to 145 (GT) contributes to the (S)-2,3,4,5-tetrahydrodipicolinate binding site.

The protein belongs to the DapB family.

The protein localises to the cytoplasm. The catalysed reaction is (S)-2,3,4,5-tetrahydrodipicolinate + NAD(+) + H2O = (2S,4S)-4-hydroxy-2,3,4,5-tetrahydrodipicolinate + NADH + H(+). The enzyme catalyses (S)-2,3,4,5-tetrahydrodipicolinate + NADP(+) + H2O = (2S,4S)-4-hydroxy-2,3,4,5-tetrahydrodipicolinate + NADPH + H(+). It participates in amino-acid biosynthesis; L-lysine biosynthesis via DAP pathway; (S)-tetrahydrodipicolinate from L-aspartate: step 4/4. Catalyzes the conversion of 4-hydroxy-tetrahydrodipicolinate (HTPA) to tetrahydrodipicolinate. This is 4-hydroxy-tetrahydrodipicolinate reductase from Rickettsia akari (strain Hartford).